The chain runs to 158 residues: Ecotin-like protein 2 (158 aa).

The protein belongs to the protease inhibitor I11 (ecotin) family.

This Leishmania major protein is Ecotin-like protein 2.